The sequence spans 332 residues: Putative ankyrin repeat protein R896 (332 aa).

ANK repeat units lie at residues 159–188 (GNDN…NVKS), 190–218 (DNCA…NVKA), 219–248 (DGNY…DIKA), 249–278 (AQNL…NIST), and 280–308 (NDYV…DIFS).

This chain is Putative ankyrin repeat protein R896, found in Acanthamoeba polyphaga mimivirus (APMV).